We begin with the raw amino-acid sequence, 397 residues long: Elongation factor Tu (397 aa).

Residues 10–206 (KPHVNIGTIG…AVDENVPDPE (197 aa)) enclose the tr-type G domain. The tract at residues 19–26 (GHVDHGKT) is G1. GTP is bound at residue 19 to 26 (GHVDHGKT). Thr-26 contacts Mg(2+). Residues 62–66 (GITIQ) form a G2 region. Residues 83-86 (DAPG) form a G3 region. GTP-binding positions include 83 to 87 (DAPGH) and 138 to 141 (NKAD). A G4 region spans residues 138 to 141 (NKAD). Residues 176–178 (SAL) form a G5 region.

It belongs to the TRAFAC class translation factor GTPase superfamily. Classic translation factor GTPase family. EF-Tu/EF-1A subfamily. Monomer.

It is found in the cytoplasm. It catalyses the reaction GTP + H2O = GDP + phosphate + H(+). Functionally, GTP hydrolase that promotes the GTP-dependent binding of aminoacyl-tRNA to the A-site of ribosomes during protein biosynthesis. The chain is Elongation factor Tu from Saccharopolyspora erythraea (strain ATCC 11635 / DSM 40517 / JCM 4748 / NBRC 13426 / NCIMB 8594 / NRRL 2338).